The sequence spans 266 residues: Phosphatidylglycerol--prolipoprotein diacylglyceryl transferase (266 aa).

7 consecutive transmembrane segments (helical) span residues 19 to 39 (IWGP…FAFA), 61 to 81 (LMFW…TLFY), 91 to 111 (LYLF…LGVI), 125 to 145 (FLQV…FGRI), 176 to 196 (PSQL…ILWF), 204 to 224 (GAVS…VEFF), and 237 to 257 (GMSM…ILMV). Position 144 (Arg144) interacts with a 1,2-diacyl-sn-glycero-3-phospho-(1'-sn-glycerol).

It belongs to the Lgt family.

It is found in the cell inner membrane. The enzyme catalyses L-cysteinyl-[prolipoprotein] + a 1,2-diacyl-sn-glycero-3-phospho-(1'-sn-glycerol) = an S-1,2-diacyl-sn-glyceryl-L-cysteinyl-[prolipoprotein] + sn-glycerol 1-phosphate + H(+). It functions in the pathway protein modification; lipoprotein biosynthesis (diacylglyceryl transfer). Catalyzes the transfer of the diacylglyceryl group from phosphatidylglycerol to the sulfhydryl group of the N-terminal cysteine of a prolipoprotein, the first step in the formation of mature lipoproteins. The protein is Phosphatidylglycerol--prolipoprotein diacylglyceryl transferase of Idiomarina loihiensis (strain ATCC BAA-735 / DSM 15497 / L2-TR).